Reading from the N-terminus, the 428-residue chain is MLDSKLLRTDLETVAAKLKTRGFVLDTAQIDELEAKRKDWQVKTQELQAERNSRSKGIGKAKAAGEDIQPLLDEVANLGDQLEEAKHASDAIQAEIELIYAGIPNLPHDSTPVGNSEDDNVEVRQWGTPKTFDFDIKDHVDLAEARGWYDNDAAVKIASSRFSVLKGPMAKLQRALTQFMLDSHTDAGYEEVYVPFLVNQDSLHGTGQLPKFEADLYKIDKHEEHDTSDRDLYLIPTAEVPVTNLFRDEIIDEDTLPLKFTAHTPCFRSEAGSYGRDTKGLIRQHQFEKVEMVQIVHPDQSYEALESLTQQAESILQKLELPYRVMSLCTGDIGFSAAKTYDLEVWLPGQQAYREISSCSNFEDFQARRLKARFRKGQDKPQLAHTLNGSGLAVGRTLVAVLENYQNADGSITVPTALRSYLGGVEIL.

237 to 239 (TAE) lines the L-serine pocket. 268-270 (RSE) contributes to the ATP binding site. Residue Glu291 coordinates L-serine. 355 to 358 (EISS) contributes to the ATP binding site. Ser390 contacts L-serine.

The protein belongs to the class-II aminoacyl-tRNA synthetase family. Type-1 seryl-tRNA synthetase subfamily. In terms of assembly, homodimer. The tRNA molecule binds across the dimer.

The protein localises to the cytoplasm. It carries out the reaction tRNA(Ser) + L-serine + ATP = L-seryl-tRNA(Ser) + AMP + diphosphate + H(+). The enzyme catalyses tRNA(Sec) + L-serine + ATP = L-seryl-tRNA(Sec) + AMP + diphosphate + H(+). It functions in the pathway aminoacyl-tRNA biosynthesis; selenocysteinyl-tRNA(Sec) biosynthesis; L-seryl-tRNA(Sec) from L-serine and tRNA(Sec): step 1/1. Catalyzes the attachment of serine to tRNA(Ser). Is also able to aminoacylate tRNA(Sec) with serine, to form the misacylated tRNA L-seryl-tRNA(Sec), which will be further converted into selenocysteinyl-tRNA(Sec). The chain is Serine--tRNA ligase from Hydrogenovibrio crunogenus (strain DSM 25203 / XCL-2) (Thiomicrospira crunogena).